Reading from the N-terminus, the 772-residue chain is 1,4-alpha-glucan branching enzyme GlgB (772 aa).

The active-site Nucleophile is the Asp-431. The active-site Proton donor is Glu-484.

This sequence belongs to the glycosyl hydrolase 13 family. GlgB subfamily. In terms of assembly, monomer.

It carries out the reaction Transfers a segment of a (1-&gt;4)-alpha-D-glucan chain to a primary hydroxy group in a similar glucan chain.. Its pathway is glycan biosynthesis; glycogen biosynthesis. Its function is as follows. Catalyzes the formation of the alpha-1,6-glucosidic linkages in glycogen by scission of a 1,4-alpha-linked oligosaccharide from growing alpha-1,4-glucan chains and the subsequent attachment of the oligosaccharide to the alpha-1,6 position. This chain is 1,4-alpha-glucan branching enzyme GlgB, found in Synechococcus sp. (strain RCC307).